Reading from the N-terminus, the 285-residue chain is Probable endonuclease 4 (285 aa).

Positions 69, 109, 145, 179, 182, 216, 229, 231, and 261 each coordinate Zn(2+).

Belongs to the AP endonuclease 2 family. The cofactor is Zn(2+).

It catalyses the reaction Endonucleolytic cleavage to 5'-phosphooligonucleotide end-products.. Its function is as follows. Endonuclease IV plays a role in DNA repair. It cleaves phosphodiester bonds at apurinic or apyrimidinic (AP) sites, generating a 3'-hydroxyl group and a 5'-terminal sugar phosphate. The sequence is that of Probable endonuclease 4 from Salmonella typhimurium (strain LT2 / SGSC1412 / ATCC 700720).